We begin with the raw amino-acid sequence, 365 residues long: Putative F-box/kelch-repeat protein At3g16880 (365 aa).

Residues 1–47 (MTKMSKLPNDLLEEILSRSPLYSMRAIRLTCKKWNTLAKEESFTKKQ) form the F-box domain. Kelch repeat units lie at residues 98–149 (RVYH…TKKS) and 155–205 (ILSS…VKGN).

The sequence is that of Putative F-box/kelch-repeat protein At3g16880 from Arabidopsis thaliana (Mouse-ear cress).